The sequence spans 1043 residues: Ras guanine nucleotide exchange factor S (1043 aa).

A coiled-coil region spans residues 109–142 (IETLQTQRRQSTLNIQALQINNELQQQLQQQQQL). Composition is skewed to low complexity over residues 135–145 (QLQQQQQLPPI), 245–258 (LSPL…GLSS), 266–281 (SKNQ…NSSS), and 293–307 (NNNN…SNSS). Disordered regions lie at residues 135 to 160 (QLQQ…TSTI) and 245 to 316 (LSPL…HQSQ). The stretch at 404-434 (LAVSLQNVEGLQNIAENLEDETLNLLDLVNE) forms a coiled coil. The N-terminal Ras-GEF domain occupies 645–768 (KDGSILKVTL…LLRGLLDKMI (124 aa)). The region spanning 803–1043 (SAQSIAQQLT…YDLSIALEPK (241 aa)) is the Ras-GEF domain.

Promotes the exchange of Ras-bound GDP by GTP. The polypeptide is Ras guanine nucleotide exchange factor S (gefS) (Dictyostelium discoideum (Social amoeba)).